A 283-amino-acid chain; its full sequence is Nucleoid occlusion protein (283 aa).

The interval 1 to 21 (MKHSFSRFFGFGEKEEEPEIA) is disordered. The segment at residues 148-167 (EALAQRLGKGQSTIANKLRL) is a DNA-binding region (H-T-H motif).

It belongs to the ParB family.

The protein resides in the cytoplasm. The protein localises to the nucleoid. In terms of biological role, effects nucleoid occlusion by binding relatively nonspecifically to DNA and preventing the assembly of the division machinery in the vicinity of the nucleoid, especially under conditions that disturb the cell cycle. It helps to coordinate cell division and chromosome segregation by preventing the formation of the Z ring through the nucleoid, which would cause chromosome breakage. This is Nucleoid occlusion protein from Bacillus velezensis (strain DSM 23117 / BGSC 10A6 / LMG 26770 / FZB42) (Bacillus amyloliquefaciens subsp. plantarum).